The sequence spans 134 residues: Global transcriptional regulator Spx (134 aa).

A disulfide bridge connects residues cysteine 10 and cysteine 13.

It belongs to the ArsC family. Spx subfamily. In terms of assembly, interacts with the C-terminal domain of the alpha subunit of the RNAP.

Its subcellular location is the cytoplasm. Its function is as follows. Global transcriptional regulator that plays a key role in stress response and exerts either positive or negative regulation of genes. Acts by interacting with the C-terminal domain of the alpha subunit of the RNA polymerase (RNAP). This interaction can enhance binding of RNAP to the promoter region of target genes and stimulate their transcription, or block interaction of RNAP with activator. The polypeptide is Global transcriptional regulator Spx (Streptococcus pyogenes serotype M3 (strain ATCC BAA-595 / MGAS315)).